A 229-amino-acid polypeptide reads, in one-letter code: Platelet-activating factor acetylhydrolase IB subunit alpha2 (229 aa).

At Ser2 the chain carries N-acetylserine. Phosphoserine is present on Ser2. Residue Ser48 is part of the active site. Ser64 is modified (phosphoserine). Catalysis depends on residues Asp193 and His196. Thr220 is modified (phosphothreonine).

It belongs to the 'GDSL' lipolytic enzyme family. Platelet-activating factor acetylhydrolase IB beta/gamma subunits subfamily. As to quaternary structure, forms a catalytic dimer which is either homodimer (alpha2/alpha2 homodimer) or heterodimer with PAFAH1B3 (alpha2/alpha1 heterodimer). Component of the cytosolic (PAF-AH (I)) heterotetrameric enzyme, which is composed of PAFAH1B1 (beta), PAFAH1B2 (alpha2) and PAFAH1B3 (alpha1) subunits. The catalytic activity of the enzyme resides in the alpha1 (PAFAH1B3) and alpha2 (PAFAH1B2) subunits, whereas the beta subunit (PAFAH1B1) has regulatory activity. Trimer formation is not essential for the catalytic activity. Interacts (homodimer form) with PAFAH1B1 (homodimer form); PAFAH1B2 competes with NDEL1 for PAFAH1B1 binding. Interacts with VLDLR; this interaction may modulate the Reelin pathway.

It localises to the cytoplasm. It catalyses the reaction a 1-O-alkyl-2-acetyl-sn-glycero-3-phosphocholine + H2O = a 1-O-alkyl-sn-glycero-3-phosphocholine + acetate + H(+). The catalysed reaction is 1-O-hexadecyl-2-acetyl-sn-glycero-3-phosphocholine + H2O = 1-O-hexadecyl-sn-glycero-3-phosphocholine + acetate + H(+). The enzyme catalyses 1-O-hexadecyl-2-acetyl-sn-glycero-3-phosphate + H2O = 1-O-hexadecyl-sn-glycero-3-phosphate + acetate + H(+). It carries out the reaction 1-O-hexadecyl-2-acetyl-sn-glycero-3-phosphoethanolamine + H2O = 1-O-hexadecyl-sn-glycero-3-phosphoethanolamine + acetate + H(+). Beta subunit (PAFAH1B1) stimulates the acetylhydrolase activity of the alpha2/alpha2 catalytic homodimer. Its function is as follows. Alpha2 catalytic subunit of the cytosolic type I platelet-activating factor (PAF) acetylhydrolase (PAF-AH (I)) heterotetrameric enzyme that catalyzes the hydrolyze of the acetyl group at the sn-2 position of PAF and its analogs and modulates the action of PAF. The activity and substrate specificity of PAF-AH (I) are affected by its subunit composition. The alpha2/alpha2 homodimer (PAFAH1B2/PAFAH1B2 homodimer) hydrolyzes PAF and 1-O-alkyl-2-acetyl-sn-glycero-3-phosphorylethanolamine (AAGPE) more efficiently than 1-O-alkyl-2-acetyl-sn-glycero-3-phosphoric acid (AAGPA). In contrast, the alpha1/alpha2 heterodimer(PAFAH1B3/PAFAH1B3 heterodimer) hydrolyzes AAGPA more efficiently than PAF, but has little hydrolytic activity towards AAGPE. May play a role in male germ cell meiosis during the late pachytenestage and meiotic divisions as well as early spermiogenesis. This Mus musculus (Mouse) protein is Platelet-activating factor acetylhydrolase IB subunit alpha2.